A 207-amino-acid chain; its full sequence is Small ribosomal subunit protein uS4 (207 aa).

A disordered region spans residues 22–54 (KSARRSISDKSKFESKPGQHGRTSGSRTSDFGL). Over residues 27-38 (SISDKSKFESKP) the composition is skewed to basic and acidic residues. Polar residues predominate over residues 42–52 (GRTSGSRTSDF). Positions 97 to 157 (SRLDNVVYRM…EKSKKQLRII (61 aa)) constitute an S4 RNA-binding domain.

It belongs to the universal ribosomal protein uS4 family. Part of the 30S ribosomal subunit. Contacts protein S5. The interaction surface between S4 and S5 is involved in control of translational fidelity.

One of the primary rRNA binding proteins, it binds directly to 16S rRNA where it nucleates assembly of the body of the 30S subunit. Functionally, with S5 and S12 plays an important role in translational accuracy. In Leptothrix cholodnii (strain ATCC 51168 / LMG 8142 / SP-6) (Leptothrix discophora (strain SP-6)), this protein is Small ribosomal subunit protein uS4.